A 162-amino-acid polypeptide reads, in one-letter code: NADH-quinone oxidoreductase subunit C (162 aa).

Belongs to the complex I 30 kDa subunit family. In terms of assembly, NDH-1 is composed of 14 different subunits. Subunits NuoB, C, D, E, F, and G constitute the peripheral sector of the complex.

The protein localises to the cell inner membrane. The catalysed reaction is a quinone + NADH + 5 H(+)(in) = a quinol + NAD(+) + 4 H(+)(out). Functionally, NDH-1 shuttles electrons from NADH, via FMN and iron-sulfur (Fe-S) centers, to quinones in the respiratory chain. The immediate electron acceptor for the enzyme in this species is believed to be ubiquinone. Couples the redox reaction to proton translocation (for every two electrons transferred, four hydrogen ions are translocated across the cytoplasmic membrane), and thus conserves the redox energy in a proton gradient. This chain is NADH-quinone oxidoreductase subunit C, found in Trichlorobacter lovleyi (strain ATCC BAA-1151 / DSM 17278 / SZ) (Geobacter lovleyi).